Consider the following 250-residue polypeptide: Diphthine synthase (250 aa).

S-adenosyl-L-methionine is bound by residues Leu-9, Asp-85, Val-88, 113 to 114, Leu-165, Ala-202, and His-227; that span reads SI.

The protein belongs to the diphthine synthase family. Homodimer.

It carries out the reaction 2-[(3S)-amino-3-carboxypropyl]-L-histidyl-[translation elongation factor 2] + 3 S-adenosyl-L-methionine = diphthine-[translation elongation factor 2] + 3 S-adenosyl-L-homocysteine + 3 H(+). It functions in the pathway protein modification; peptidyl-diphthamide biosynthesis. S-adenosyl-L-methionine-dependent methyltransferase that catalyzes the trimethylation of the amino group of the modified target histidine residue in translation elongation factor 2 (EF-2), to form an intermediate called diphthine. The three successive methylation reactions represent the second step of diphthamide biosynthesis. The protein is Diphthine synthase of Methanoregula boonei (strain DSM 21154 / JCM 14090 / 6A8).